The primary structure comprises 835 residues: Translation initiation factor IF-2 (835 aa).

The interval 1–243 (MSDTDGKKTL…RARQKAMGGA (243 aa)) is disordered. A compositionally biased stretch (low complexity) spans 43–67 (VPKPGAGKPSAGGSSPAGDPSRRPA). Composition is skewed to basic and acidic residues over residues 85-147 (KARE…EAKR), 157-166 (EAPKAERSAE), and 175-205 (EGGD…DGRR). A tr-type G domain is found at 332–500 (PRPPVITIMG…AIALQAEILE (169 aa)). Residues 341–348 (GHVDHGKT) are G1. 341-348 (GHVDHGKT) contacts GTP. Residues 366–370 (GITQH) are G2. Residues 388–391 (DTPG) form a G3 region. Residues 388–392 (DTPGH) and 442–445 (NKID) contribute to the GTP site. The G4 stretch occupies residues 442-445 (NKID). Positions 478-480 (SAK) are G5.

This sequence belongs to the TRAFAC class translation factor GTPase superfamily. Classic translation factor GTPase family. IF-2 subfamily.

The protein localises to the cytoplasm. In terms of biological role, one of the essential components for the initiation of protein synthesis. Protects formylmethionyl-tRNA from spontaneous hydrolysis and promotes its binding to the 30S ribosomal subunits. Also involved in the hydrolysis of GTP during the formation of the 70S ribosomal complex. This Ruegeria pomeroyi (strain ATCC 700808 / DSM 15171 / DSS-3) (Silicibacter pomeroyi) protein is Translation initiation factor IF-2.